Consider the following 261-residue polypeptide: 8-demethyl-8-(2,3-dimethoxy-alpha-L-rhamnosyl)-tetracenomycin-C 4'-O-methyltransferase (261 aa).

Residues 53 to 54, 81 to 85, 111 to 115, phenylalanine 167, 185 to 186, and serine 191 contribute to the S-adenosyl-L-methionine site; these read TM, ETGVW, DSFEG, and DG. Aspartate 185 is a binding site for Mg(2+). Aspartate 212 and aspartate 213 together coordinate Mg(2+).

Belongs to the methyltransferase TylF/MycF family. Mg(2+) serves as cofactor.

The enzyme catalyses 8-demethyl-8-(2,3-di-O-methyl-alpha-L-rhamnosyl)-tetracenomycin C + S-adenosyl-L-methionine = 8-demethyl-8-(2,3,4-tri-O-methyl-alpha-L-rhamnosyl)-tetracenomycin C + S-adenosyl-L-homocysteine + H(+). The protein operates within antibiotic biosynthesis. O-methyltransferase involved in the biosynthesis of the permethylated L-rhamnose moiety of elloramycin, an antitumor polyketide. Mediates the methylation of the hydroxy groups at the 4'-position after the sugar moiety has been attached to the aglycon. This is 8-demethyl-8-(2,3-dimethoxy-alpha-L-rhamnosyl)-tetracenomycin-C 4'-O-methyltransferase from Streptomyces olivaceus.